Consider the following 344-residue polypeptide: Dihydroorotate dehydrogenase (quinone) (344 aa).

FMN-binding positions include 65–69 (AGFDK) and Thr-89. Lys-69 contacts substrate. Residue 114-118 (NRMGF) participates in substrate binding. FMN contacts are provided by Asn-145 and Asn-178. Position 178 (Asn-178) interacts with substrate. The active-site Nucleophile is Ser-181. Asn-183 is a substrate binding site. FMN-binding residues include Lys-215 and Thr-243. 244–245 (NT) lines the substrate pocket. FMN is bound by residues Gly-269, Gly-298, and 319-320 (YT).

This sequence belongs to the dihydroorotate dehydrogenase family. Type 2 subfamily. As to quaternary structure, monomer. FMN serves as cofactor.

Its subcellular location is the cell membrane. It carries out the reaction (S)-dihydroorotate + a quinone = orotate + a quinol. The protein operates within pyrimidine metabolism; UMP biosynthesis via de novo pathway; orotate from (S)-dihydroorotate (quinone route): step 1/1. In terms of biological role, catalyzes the conversion of dihydroorotate to orotate with quinone as electron acceptor. This chain is Dihydroorotate dehydrogenase (quinone), found in Clavibacter sepedonicus (Clavibacter michiganensis subsp. sepedonicus).